Reading from the N-terminus, the 63-residue chain is Anionic peptide 10.1 (63 aa).

A signal peptide spans 1–20 (MISRFCLLFLLVFVVSKIQA).

The protein belongs to the non-disulfide-bridged peptide (NDBP) superfamily. Long chain multifunctional peptide (group 2) family. Expressed by the venom gland.

It is found in the secreted. In Lychas mucronatus (Chinese swimming scorpion), this protein is Anionic peptide 10.1.